We begin with the raw amino-acid sequence, 148 residues long: MQTAHTGLSHTADGADGQTSRCCPGNAGTKAVIPSGAHPVARALEASRNSSKSMVPLTQRPGTRHHRFSLFVPFPTSLEAEIACGSLVPDVEPHRGLVGKELKVSGCMLEVRWIAEDSRLLRLSIINFLDQLSLVVNTIQLFGPPVSC.

The disordered stretch occupies residues 1-21; that stretch reads MQTAHTGLSHTADGADGQTSR.

The protein belongs to the CTAG/PCC1 family. As to quaternary structure, component of the EKC/KEOPS complex composed of at least GON7, TP53RK, TPRKB, OSGEP and LAGE3; the whole complex dimerizes.

It is found in the cytoplasm. It localises to the nucleus. Component of the EKC/KEOPS complex that is required for the formation of a threonylcarbamoyl group on adenosine at position 37 (t(6)A37) in tRNAs that read codons beginning with adenine. The complex is probably involved in the transfer of the threonylcarbamoyl moiety of threonylcarbamoyl-AMP (TC-AMP) to the N6 group of A37. LAGE3 functions as a dimerization module for the complex. This is EKC/KEOPS complex subunit Lage3 from Mus musculus (Mouse).